The primary structure comprises 280 residues: 4-diphosphocytidyl-2-C-methyl-D-erythritol kinase (280 aa).

Lysine 8 is a catalytic residue. 91 to 101 (PVAAGLAGGST) is an ATP binding site. Aspartate 133 is an active-site residue.

The protein belongs to the GHMP kinase family. IspE subfamily.

It carries out the reaction 4-CDP-2-C-methyl-D-erythritol + ATP = 4-CDP-2-C-methyl-D-erythritol 2-phosphate + ADP + H(+). It participates in isoprenoid biosynthesis; isopentenyl diphosphate biosynthesis via DXP pathway; isopentenyl diphosphate from 1-deoxy-D-xylulose 5-phosphate: step 3/6. Its function is as follows. Catalyzes the phosphorylation of the position 2 hydroxy group of 4-diphosphocytidyl-2C-methyl-D-erythritol. This chain is 4-diphosphocytidyl-2-C-methyl-D-erythritol kinase, found in Clostridium botulinum (strain 657 / Type Ba4).